We begin with the raw amino-acid sequence, 252 residues long: Indole-3-glycerol phosphate synthase (252 aa).

The protein belongs to the TrpC family.

It catalyses the reaction 1-(2-carboxyphenylamino)-1-deoxy-D-ribulose 5-phosphate + H(+) = (1S,2R)-1-C-(indol-3-yl)glycerol 3-phosphate + CO2 + H2O. It functions in the pathway amino-acid biosynthesis; L-tryptophan biosynthesis; L-tryptophan from chorismate: step 4/5. The protein is Indole-3-glycerol phosphate synthase of Listeria welshimeri serovar 6b (strain ATCC 35897 / DSM 20650 / CCUG 15529 / CIP 8149 / NCTC 11857 / SLCC 5334 / V8).